Here is a 259-residue protein sequence, read N- to C-terminus: Probable ABC transporter permease protein RF_0080 (259 aa).

Transmembrane regions (helical) follow at residues 13–35, 49–69, 148–168, 195–215, and 237–257; these read TIKFAQSVGSFSLFSFAAVSSII, LFIGFHSLPVVAMTTFFSGAV, VIAAIITMPCLVLIGDIIGVM, PIDVISGLVKAGVFGFIISII, and AVVNSSILILISNYLITELFF.

The protein belongs to the MlaE permease family.

The protein resides in the cell inner membrane. In terms of biological role, could be part of an ABC transporter complex. This is Probable ABC transporter permease protein RF_0080 from Rickettsia felis (strain ATCC VR-1525 / URRWXCal2) (Rickettsia azadi).